The following is a 395-amino-acid chain: Putative nickel insertion protein (395 aa).

This sequence belongs to the LarC family.

The protein is Putative nickel insertion protein of Archaeoglobus fulgidus (strain ATCC 49558 / DSM 4304 / JCM 9628 / NBRC 100126 / VC-16).